Reading from the N-terminus, the 313-residue chain is Antiviral protein I (313 aa).

The N-terminal stretch at 1 to 22 (MKSMLVVTISIWLILAPTSTWA) is a signal peptide. Disulfide bonds link Cys56/Cys281 and Cys107/Cys128. Tyr94 is a catalytic residue. Val95 is a binding site for substrate. Ser143 is a substrate binding site. Tyr145 is a catalytic residue. Ser197 provides a ligand contact to substrate. Active-site residues include Glu198 and Arg201. Residue Arg201 coordinates substrate. Residues 286–313 (NQNAMFPQLIMSTYYNYMVNLGDLFEGF) constitute a propeptide that is removed on maturation.

It belongs to the ribosome-inactivating protein family. Type 1 RIP subfamily. Monomer. As to expression, expressed in spring leaves (at protein level). Expressed in roots (at protein level).

It catalyses the reaction Endohydrolysis of the N-glycosidic bond at one specific adenosine on the 28S rRNA.. In terms of biological role, possesses antiviral potency. Inhibits viral infection of plants (tobacco mosaic virus). Inhibits protein synthesis. Releases both adenine and guanine from Escherichia coli rRNA in vitro. Activity on guanine is 20 times slower than that on adenine. This is Antiviral protein I (PAP1) from Phytolacca americana (American pokeweed).